A 143-amino-acid chain; its full sequence is Nucleoside diphosphate kinase (143 aa).

ATP contacts are provided by K11, F59, R87, T93, R104, and N114. The active-site Pros-phosphohistidine intermediate is the H117.

Belongs to the NDK family. As to quaternary structure, homotetramer. The cofactor is Mg(2+).

The protein resides in the cytoplasm. The catalysed reaction is a 2'-deoxyribonucleoside 5'-diphosphate + ATP = a 2'-deoxyribonucleoside 5'-triphosphate + ADP. It carries out the reaction a ribonucleoside 5'-diphosphate + ATP = a ribonucleoside 5'-triphosphate + ADP. Major role in the synthesis of nucleoside triphosphates other than ATP. The ATP gamma phosphate is transferred to the NDP beta phosphate via a ping-pong mechanism, using a phosphorylated active-site intermediate. The protein is Nucleoside diphosphate kinase of Shewanella sp. (strain W3-18-1).